Reading from the N-terminus, the 314-residue chain is Taste receptor type 2 member 42 (314 aa).

Residues 1-7 (MATELDK) are Extracellular-facing. Residues 8–28 (IFLTLAIVEFIIGMLGNVFIG) traverse the membrane as a helical segment. Over 29–50 (LANCSEGIKNQKVFSVDFILTC) the chain is Cytoplasmic. Residues 51–71 (LAISTIGHLLVILFDSHVAGL) form a helical membrane-spanning segment. At 72-101 (APHLYATDRVVRPVTVLWHMTNHLTTWLAT) the chain is on the extracellular side. A helical transmembrane segment spans residues 102–122 (CLSIFYFFKIAHFPHSLFLWL). Over 123–127 (RWRMN) the chain is Cytoplasmic. A helical transmembrane segment spans residues 128 to 148 (RVIAILLTLSLFLLIFDCLVL). Residues 149–187 (EMFIDISLNIIDKSNLTLYLDESKTPYDKLFLLKTLLSL) lie on the Extracellular side of the membrane. The N-linked (GlcNAc...) asparagine glycan is linked to asparagine 163. The helical transmembrane segment at 188–208 (NSFIPFSLCLTSLLFLFLSLV) threads the bilayer. At 209–238 (RHTRNLKLSSLGSRDSSTEAHRRAMKMVMS) the chain is on the cytoplasmic side. A helical membrane pass occupies residues 239–259 (FLFLFIVHFFSLQVANWTFCI). Residues 260–265 (LGNNKY) lie on the Extracellular side of the membrane. A helical membrane pass occupies residues 266 to 286 (TQFVMLALHAFPSCHSFILIL). Topologically, residues 287 to 314 (GNSKLRQTAVRLLWHLRNYTKRPNPLPL) are cytoplasmic.

The protein belongs to the G-protein coupled receptor T2R family.

Its subcellular location is the membrane. Functionally, receptor that may play a role in the perception of bitterness and is gustducin-linked. May play a role in sensing the chemical composition of the gastrointestinal content. The activity of this receptor may stimulate alpha gustducin, mediate PLC-beta-2 activation and lead to the gating of TRPM5. This Papio hamadryas (Hamadryas baboon) protein is Taste receptor type 2 member 42 (TAS2R42).